The sequence spans 336 residues: Dihydroorotate dehydrogenase (quinone) (336 aa).

Residues 62-66 (AGLDK) and T86 contribute to the FMN site. K66 provides a ligand contact to substrate. 111–115 (NRMGF) is a substrate binding site. Positions 139 and 172 each coordinate FMN. N172 is a substrate binding site. S175 functions as the Nucleophile in the catalytic mechanism. N177 lines the substrate pocket. 2 residues coordinate FMN: K217 and T245. A substrate-binding site is contributed by 246–247 (NT). Residues G268, G297, and 318 to 319 (YS) contribute to the FMN site.

This sequence belongs to the dihydroorotate dehydrogenase family. Type 2 subfamily. As to quaternary structure, monomer. The cofactor is FMN.

It localises to the cell membrane. The enzyme catalyses (S)-dihydroorotate + a quinone = orotate + a quinol. Its pathway is pyrimidine metabolism; UMP biosynthesis via de novo pathway; orotate from (S)-dihydroorotate (quinone route): step 1/1. In terms of biological role, catalyzes the conversion of dihydroorotate to orotate with quinone as electron acceptor. This Escherichia coli (strain SE11) protein is Dihydroorotate dehydrogenase (quinone).